The sequence spans 954 residues: Zinc finger protein 618 (954 aa).

Met1 is modified (N-acetylmethionine). Residues 1 to 19 (MNQPGGAAAPQADGASAAG) are compositionally biased toward low complexity. The disordered stretch occupies residues 1–56 (MNQPGGAAAPQADGASAAGRKSTASRERLKRSQKSTKVEGPEPVPAEASLSAEQGT). Residues Lys63 and Lys81 each participate in a glycyl lysine isopeptide (Lys-Gly) (interchain with G-Cter in SUMO2) cross-link. 2 consecutive C2H2-type zinc fingers follow at residues 147-169 (YECGICGKKYKYYNCFQTHVRAH) and 188-210 (YTCDICGKKYKYYSCFQEHRDLH). Lys239 participates in a covalent cross-link: Glycyl lysine isopeptide (Lys-Gly) (interchain with G-Cter in SUMO2). A C2H2-type 3 zinc finger spans residues 256-278 (YTCEFCGKQYKYYTPYQEHVALH). 2 disordered regions span residues 282 to 307 (STAPGWEPPDDPDTGSECSHPEVSPS) and 337 to 390 (RTPP…NSSE). Residues 340–357 (PATQTQTFRTPNSGSPAS) show a composition bias toward polar residues. Basic and acidic residues predominate over residues 366–380 (FSRRVEGKAQNHFEE). The C2H2-type 4 zinc-finger motif lies at 392–414 (YTCGACGIQFQFYNNLLEHMQSH). The disordered stretch occupies residues 421–463 (NIASNQSRSPPAVVEEKWKPQAQRNSANNTTTSGLTPNSMIPE). Lys437 participates in a covalent cross-link: Glycyl lysine isopeptide (Lys-Gly) (interchain with G-Cter in SUMO2). Residues 442–459 (AQRNSANNTTTSGLTPNS) show a composition bias toward polar residues.

It belongs to the krueppel C2H2-type zinc-finger protein family. As to quaternary structure, interacts with UHRF2.

The protein resides in the nucleus. Its subcellular location is the chromosome. Functionally, regulates UHRF2 function as a specific 5-hydroxymethylcytosine (5hmC) reader by regulating its chromatin localization. The polypeptide is Zinc finger protein 618 (ZNF618) (Homo sapiens (Human)).